Consider the following 192-residue polypeptide: Pyridoxal 5'-phosphate synthase subunit PdxT (192 aa).

Residue glycine 46 to serine 48 participates in L-glutamine binding. The Nucleophile role is filled by cysteine 77. L-glutamine-binding positions include arginine 103 and isoleucine 131–arginine 132. Residues histidine 167 and glutamate 169 each act as charge relay system in the active site.

The protein belongs to the glutaminase PdxT/SNO family. In the presence of PdxS, forms a dodecamer of heterodimers. Only shows activity in the heterodimer.

It catalyses the reaction aldehydo-D-ribose 5-phosphate + D-glyceraldehyde 3-phosphate + L-glutamine = pyridoxal 5'-phosphate + L-glutamate + phosphate + 3 H2O + H(+). It carries out the reaction L-glutamine + H2O = L-glutamate + NH4(+). Its pathway is cofactor biosynthesis; pyridoxal 5'-phosphate biosynthesis. Catalyzes the hydrolysis of glutamine to glutamate and ammonia as part of the biosynthesis of pyridoxal 5'-phosphate. The resulting ammonia molecule is channeled to the active site of PdxS. This is Pyridoxal 5'-phosphate synthase subunit PdxT from Exiguobacterium sibiricum (strain DSM 17290 / CCUG 55495 / CIP 109462 / JCM 13490 / 255-15).